An 833-amino-acid chain; its full sequence is MTFYNHKAIEPKWQAFWADNHTFKTGTDASKPKFYALDMFPYPSGAGLHVGHPEGYTATDILSRFKRAQGYNVLHPMGWDAFGLPAEQYAMDTGNDPAEFTAENIANFKRQINALGFSYDWDREINTTDPSYYKWTQWIFTKLYEKGLAYEAEVPVNWVEELGTAIANEEVLPDGTSERGGYPVVRKPMRQWMLKITAYAERLLADLEEVDWPESIKDMQRNWIGKSTGANVTFKVKDTDKDFTVFTTRPDTLFGATYAVLAPEHALVDSITTAEQAAAVAEYKRQASLKSDLARTDLAKEKTGVWTGAYAINPVNGKEMPIWIADYVLASYGTGAIMAVPAHDERDWAFAKQFNLEIIPVLEGGNVDEAAYTEDGIHINSGFLDGLDKACAITKMVAWLEETGVGHEKVSYRLRDWLFSRQRYWGEPIPIIHWEDGTSTAVPEQDLPLVLPVTKDIRPSGTGESPLANLTDWLEVTREDGVKGRRETNTMPQWAGSSWYYLRYIDPHNDEQLADKDLLKQWLPVDIYIGGAEHAVLHLLYARFWHKVLYDLGVVPTKEPFQKLFNQGMILGTSYRDHRGALVATDKVDKRDGSFFHMETGEELEQAPAKMSKSLKNVVNPDDVVEQYGADTLRVYEMFMGPLDASIAWSEEGLEGARKFLDRVYRLITTKEIVAENSGALDKAYHETVKAVTEQIEGMKFNTAIAQLMIFVNAANKEDELYVAYAKGFVQLLAPFAPHLGEELWQILTASGQSISYVAWPTHDDSKLVENDVEIVVQIKGKVKAKLVVAKDLSREELEKVALAHDKIQAEIAGKEVAKVIVVPNKLVNIVVK.

The 'HIGH' region signature appears at 41-52; the sequence is PYPSGAGLHVGH. The 'KMSKS' region signature appears at 610 to 614; it reads KMSKS. Lys613 contributes to the ATP binding site.

It belongs to the class-I aminoacyl-tRNA synthetase family.

The protein resides in the cytoplasm. The catalysed reaction is tRNA(Leu) + L-leucine + ATP = L-leucyl-tRNA(Leu) + AMP + diphosphate. The polypeptide is Leucine--tRNA ligase (Streptococcus equi subsp. zooepidemicus (strain MGCS10565)).